A 488-amino-acid polypeptide reads, in one-letter code: Ribosomal RNA small subunit methyltransferase F (488 aa).

S-adenosyl-L-methionine is bound by residues 135–141 (ASAPGSK), glutamate 159, aspartate 186, and aspartate 204. Cysteine 257 functions as the Nucleophile in the catalytic mechanism.

The protein belongs to the class I-like SAM-binding methyltransferase superfamily. RsmB/NOP family.

The protein resides in the cytoplasm. The enzyme catalyses cytidine(1407) in 16S rRNA + S-adenosyl-L-methionine = 5-methylcytidine(1407) in 16S rRNA + S-adenosyl-L-homocysteine + H(+). Its function is as follows. Specifically methylates the cytosine at position 1407 (m5C1407) of 16S rRNA. The sequence is that of Ribosomal RNA small subunit methyltransferase F from Shewanella pealeana (strain ATCC 700345 / ANG-SQ1).